A 329-amino-acid chain; its full sequence is GTP 3',8-cyclase (329 aa).

Residues A8 to A234 form the Radical SAM core domain. R17 provides a ligand contact to GTP. The [4Fe-4S] cluster site is built by C24 and C28. Y30 is a binding site for S-adenosyl-L-methionine. C31 contacts [4Fe-4S] cluster. R68 is a GTP binding site. S-adenosyl-L-methionine is bound at residue G72. GTP is bound at residue T99. Position 123 (S123) interacts with S-adenosyl-L-methionine. A GTP-binding site is contributed by K160. M194 contributes to the S-adenosyl-L-methionine binding site. The [4Fe-4S] cluster site is built by C257 and C260. Position 262 to 264 (R262 to R264) interacts with GTP. C274 contributes to the [4Fe-4S] cluster binding site.

It belongs to the radical SAM superfamily. MoaA family. Monomer and homodimer. The cofactor is [4Fe-4S] cluster.

The enzyme catalyses GTP + AH2 + S-adenosyl-L-methionine = (8S)-3',8-cyclo-7,8-dihydroguanosine 5'-triphosphate + 5'-deoxyadenosine + L-methionine + A + H(+). Its pathway is cofactor biosynthesis; molybdopterin biosynthesis. In terms of biological role, catalyzes the cyclization of GTP to (8S)-3',8-cyclo-7,8-dihydroguanosine 5'-triphosphate. The chain is GTP 3',8-cyclase from Klebsiella pneumoniae (strain 342).